Here is a 1434-residue protein sequence, read N- to C-terminus: DNA-directed RNA polymerase subunit beta' (1434 aa).

Zn(2+)-binding residues include Cys-70, Cys-72, Cys-85, and Cys-88. Residues Asp-460, Asp-462, and Asp-464 each contribute to the Mg(2+) site. Residues Cys-840, Cys-914, Cys-921, and Cys-924 each contribute to the Zn(2+) site.

Belongs to the RNA polymerase beta' chain family. In terms of assembly, the RNAP catalytic core consists of 2 alpha, 1 beta, 1 beta' and 1 omega subunit. When a sigma factor is associated with the core the holoenzyme is formed, which can initiate transcription. Mg(2+) is required as a cofactor. Requires Zn(2+) as cofactor.

The enzyme catalyses RNA(n) + a ribonucleoside 5'-triphosphate = RNA(n+1) + diphosphate. Its function is as follows. DNA-dependent RNA polymerase catalyzes the transcription of DNA into RNA using the four ribonucleoside triphosphates as substrates. The sequence is that of DNA-directed RNA polymerase subunit beta' from Tolumonas auensis (strain DSM 9187 / NBRC 110442 / TA 4).